A 293-amino-acid polypeptide reads, in one-letter code: Phosphoribosylaminoimidazole-succinocarboxamide synthase (293 aa).

The protein belongs to the SAICAR synthetase family.

The enzyme catalyses 5-amino-1-(5-phospho-D-ribosyl)imidazole-4-carboxylate + L-aspartate + ATP = (2S)-2-[5-amino-1-(5-phospho-beta-D-ribosyl)imidazole-4-carboxamido]succinate + ADP + phosphate + 2 H(+). It functions in the pathway purine metabolism; IMP biosynthesis via de novo pathway; 5-amino-1-(5-phospho-D-ribosyl)imidazole-4-carboxamide from 5-amino-1-(5-phospho-D-ribosyl)imidazole-4-carboxylate: step 1/2. The polypeptide is Phosphoribosylaminoimidazole-succinocarboxamide synthase (Desulfosudis oleivorans (strain DSM 6200 / JCM 39069 / Hxd3) (Desulfococcus oleovorans)).